Consider the following 372-residue polypeptide: Peptide chain release factor 2 (372 aa).

Q253 carries the N5-methylglutamine modification.

The protein belongs to the prokaryotic/mitochondrial release factor family. Methylated by PrmC. Methylation increases the termination efficiency of RF2.

The protein localises to the cytoplasm. Functionally, peptide chain release factor 2 directs the termination of translation in response to the peptide chain termination codons UGA and UAA. The polypeptide is Peptide chain release factor 2 (Nocardia farcinica (strain IFM 10152)).